The primary structure comprises 595 residues: Acriflavine sensitivity control protein acr-2 (595 aa).

A DNA-binding region (zn(2)-C6 fungal-type) is located at residues C22–C49. Over residues T69–T88 the composition is skewed to low complexity. Residues T69 to Q172 are disordered. Polar residues predominate over residues V89–P117. Over residues S118–T138 the composition is skewed to low complexity.

It is found in the nucleus. Probable transcriptional regulator. This is Acriflavine sensitivity control protein acr-2 (acr-2) from Neurospora crassa (strain ATCC 24698 / 74-OR23-1A / CBS 708.71 / DSM 1257 / FGSC 987).